Here is a 335-residue protein sequence, read N- to C-terminus: Epidermal differentiation-specific protein (335 aa).

4 Beta/gamma crystallin 'Greek key' domains span residues 2–42 (NTIT…KIVG), 43–81 (QPWI…RLIT), 87–126 (PQIT…RVQR), and 127–169 (GAWA…YPLR).

This sequence belongs to the beta/gamma-crystallin family. As to expression, epidermis specific.

The chain is Epidermal differentiation-specific protein from Cynops pyrrhogaster (Japanese fire-bellied newt).